Consider the following 166-residue polypeptide: Small ribosomal subunit protein uS5 (166 aa).

Residues Leu11–Val74 enclose the S5 DRBM domain.

The protein belongs to the universal ribosomal protein uS5 family. In terms of assembly, part of the 30S ribosomal subunit. Contacts proteins S4 and S8.

Its function is as follows. With S4 and S12 plays an important role in translational accuracy. Functionally, located at the back of the 30S subunit body where it stabilizes the conformation of the head with respect to the body. The sequence is that of Small ribosomal subunit protein uS5 from Acinetobacter baumannii (strain ATCC 17978 / DSM 105126 / CIP 53.77 / LMG 1025 / NCDC KC755 / 5377).